Consider the following 556-residue polypeptide: Potassium-transporting ATPase potassium-binding subunit (556 aa).

12 consecutive transmembrane segments (helical) span residues A3–L23, A57–L77, G129–M149, L172–P192, L247–F267, W278–A298, L319–V339, L346–G366, G371–G391, L408–I428, F486–P506, and G516–F536.

This sequence belongs to the KdpA family. As to quaternary structure, the system is composed of three essential subunits: KdpA, KdpB and KdpC.

The protein resides in the cell inner membrane. Its function is as follows. Part of the high-affinity ATP-driven potassium transport (or Kdp) system, which catalyzes the hydrolysis of ATP coupled with the electrogenic transport of potassium into the cytoplasm. This subunit binds the periplasmic potassium ions and delivers the ions to the membrane domain of KdpB through an intramembrane tunnel. In Paramagnetospirillum magneticum (strain ATCC 700264 / AMB-1) (Magnetospirillum magneticum), this protein is Potassium-transporting ATPase potassium-binding subunit.